Consider the following 129-residue polypeptide: Small ribosomal subunit protein uS11 (129 aa).

The protein belongs to the universal ribosomal protein uS11 family. In terms of assembly, part of the 30S ribosomal subunit. Interacts with proteins S7 and S18. Binds to IF-3.

Located on the platform of the 30S subunit, it bridges several disparate RNA helices of the 16S rRNA. Forms part of the Shine-Dalgarno cleft in the 70S ribosome. This Azobacteroides pseudotrichonymphae genomovar. CFP2 protein is Small ribosomal subunit protein uS11.